The chain runs to 242 residues: Biosynthetic peptidoglycan transglycosylase (242 aa).

Residues 19–39 form a helical membrane-spanning segment; the sequence is LMVVLAIFWGGGIALFSVAPV.

The protein belongs to the glycosyltransferase 51 family.

It localises to the cell inner membrane. It catalyses the reaction [GlcNAc-(1-&gt;4)-Mur2Ac(oyl-L-Ala-gamma-D-Glu-L-Lys-D-Ala-D-Ala)](n)-di-trans,octa-cis-undecaprenyl diphosphate + beta-D-GlcNAc-(1-&gt;4)-Mur2Ac(oyl-L-Ala-gamma-D-Glu-L-Lys-D-Ala-D-Ala)-di-trans,octa-cis-undecaprenyl diphosphate = [GlcNAc-(1-&gt;4)-Mur2Ac(oyl-L-Ala-gamma-D-Glu-L-Lys-D-Ala-D-Ala)](n+1)-di-trans,octa-cis-undecaprenyl diphosphate + di-trans,octa-cis-undecaprenyl diphosphate + H(+). Its pathway is cell wall biogenesis; peptidoglycan biosynthesis. Functionally, peptidoglycan polymerase that catalyzes glycan chain elongation from lipid-linked precursors. This Escherichia coli O45:K1 (strain S88 / ExPEC) protein is Biosynthetic peptidoglycan transglycosylase.